A 71-amino-acid polypeptide reads, in one-letter code: Phosphatidylinositol N-acetylglucosaminyltransferase subunit Y (71 aa).

Residue Met-1 is a topological domain, cytoplasmic. Residues 2 to 21 form a helical membrane-spanning segment; that stretch reads FFSLPVLTVLIPLVSLTGLL. Topologically, residues 22–44 are lumenal; the sequence is YSASVEEDFPNGCTSTASLCFYS. The chain crosses the membrane as a helical span at residues 45 to 65; sequence LLLPITLPVYVFFHLWTWMGL. Topologically, residues 66-71 are cytoplasmic; it reads KLFRHN.

Component of the glycosylphosphatidylinositol-N-acetylglucosaminyltransferase (GPI-GnT) complex composed at least by PIGA, PIGC, PIGH, PIGP, PIGQ, PIGY and DPM2.

It is found in the endoplasmic reticulum membrane. Its pathway is glycolipid biosynthesis; glycosylphosphatidylinositol-anchor biosynthesis. Part of the glycosylphosphatidylinositol-N-acetylglucosaminyltransferase (GPI-GnT) complex that catalyzes the transfer of N-acetylglucosamine from UDP-N-acetylglucosamine to phosphatidylinositol and participates in the first step of GPI biosynthesis. May act by regulating the catalytic subunit PIGA. This Xenopus tropicalis (Western clawed frog) protein is Phosphatidylinositol N-acetylglucosaminyltransferase subunit Y.